The primary structure comprises 173 residues: ATP-dependent protease subunit HslV (173 aa).

Thr2 is an active-site residue. Na(+)-binding residues include Gly158, Asp161, and Ser164.

This sequence belongs to the peptidase T1B family. HslV subfamily. As to quaternary structure, a double ring-shaped homohexamer of HslV is capped on each side by a ring-shaped HslU homohexamer. The assembly of the HslU/HslV complex is dependent on binding of ATP.

It is found in the cytoplasm. The enzyme catalyses ATP-dependent cleavage of peptide bonds with broad specificity.. With respect to regulation, allosterically activated by HslU binding. Its function is as follows. Protease subunit of a proteasome-like degradation complex believed to be a general protein degrading machinery. This chain is ATP-dependent protease subunit HslV, found in Mannheimia haemolytica (Pasteurella haemolytica).